A 147-amino-acid polypeptide reads, in one-letter code: Vasopressin-neurophysin 2-copeptin (147 aa).

An intrachain disulfide couples Cys1 to Cys6. A Glycine amide modification is found at Gly9. 7 disulfide bridges follow: Cys22–Cys66, Cys25–Cys39, Cys33–Cys56, Cys40–Cys46, Cys73–Cys85, Cys79–Cys97, and Cys86–Cys91. Residue Asn114 is glycosylated (N-linked (GlcNAc...) asparagine).

Belongs to the vasopressin/oxytocin family. Interacts with vasopressin receptors V1bR/AVPR1B (Ki=85 pM), V1aR/AVPR1A (Ki=0.6 nM) and V2R/AVPR2 (Ki=4.9 nM). Interacts with oxytocin receptor (OXTR) (Ki=110 nM).

Its subcellular location is the secreted. Its function is as follows. Neurophysin 2 specifically binds vasopressin. Vasopressin has a direct antidiuretic action on the kidney, it also causes vasoconstriction of the peripheral vessels. Acts by binding to vasopressin receptors (V1bR/AVPR1B, V1aR/AVPR1A, and V2R/AVPR2). The polypeptide is Vasopressin-neurophysin 2-copeptin (AVP) (Ovis aries (Sheep)).